Consider the following 277-residue polypeptide: NH(3)-dependent NAD(+) synthetase (277 aa).

47–54 provides a ligand contact to ATP; that stretch reads GISGGQDS. Residue D53 coordinates Mg(2+). R141 lines the deamido-NAD(+) pocket. Residue T161 participates in ATP binding. Residue E166 coordinates Mg(2+). Residues K174 and D181 each contribute to the deamido-NAD(+) site. Residues K190 and T212 each coordinate ATP. Residue 261–262 coordinates deamido-NAD(+); sequence HK.

This sequence belongs to the NAD synthetase family. As to quaternary structure, homodimer.

The catalysed reaction is deamido-NAD(+) + NH4(+) + ATP = AMP + diphosphate + NAD(+) + H(+). It participates in cofactor biosynthesis; NAD(+) biosynthesis; NAD(+) from deamido-NAD(+) (ammonia route): step 1/1. Functionally, catalyzes the ATP-dependent amidation of deamido-NAD to form NAD. Uses ammonia as a nitrogen source. The protein is NH(3)-dependent NAD(+) synthetase of Lactobacillus gasseri (strain ATCC 33323 / DSM 20243 / BCRC 14619 / CIP 102991 / JCM 1131 / KCTC 3163 / NCIMB 11718 / NCTC 13722 / AM63).